Consider the following 446-residue polypeptide: Tubulin beta-2 chain (446 aa).

GTP is bound by residues Gln11, Glu69, Ser138, Gly142, Thr143, Gly144, Asn204, and Asn226. Glu69 serves as a coordination point for Mg(2+). Residues 424 to 446 are disordered; the sequence is QYQEATADEEGEFDEDEEGGGDE. Positions 429 to 446 are enriched in acidic residues; that stretch reads TADEEGEFDEDEEGGGDE.

Belongs to the tubulin family. In terms of assembly, dimer of alpha and beta chains. A typical microtubule is a hollow water-filled tube with an outer diameter of 25 nm and an inner diameter of 15 nM. Alpha-beta heterodimers associate head-to-tail to form protofilaments running lengthwise along the microtubule wall with the beta-tubulin subunit facing the microtubule plus end conferring a structural polarity. Microtubules usually have 13 protofilaments but different protofilament numbers can be found in some organisms and specialized cells. Mg(2+) is required as a cofactor.

The protein localises to the cytoplasm. It localises to the cytoskeleton. In terms of biological role, tubulin is the major constituent of microtubules, a cylinder consisting of laterally associated linear protofilaments composed of alpha- and beta-tubulin heterodimers. Microtubules grow by the addition of GTP-tubulin dimers to the microtubule end, where a stabilizing cap forms. Below the cap, tubulin dimers are in GDP-bound state, owing to GTPase activity of alpha-tubulin. The protein is Tubulin beta-2 chain (betaTub85D) of Drosophila erecta (Fruit fly).